The sequence spans 101 residues: Apolipoprotein C-II (101 aa).

Residues 1 to 26 form the signal peptide; that stretch reads MGTRYFLALFLILLVLGFKVQGVAMA. Positions 66–74 are lipid binding; sequence TMDEKIRDI. Residues 78 to 101 are lipoprotein lipase cofactor; sequence STAAVTTYAGIFTDQLLSLLKGDQ.

Belongs to the apolipoprotein C2 family. Proapolipoprotein C-II is synthesized as a sialic acid containing glycoprotein which is subsequently desialylated prior to its proteolytic processing. Post-translationally, proapolipoprotein C-II undergoes proteolytic cleavage of its N-terminal hexapeptide to generate apolipoprotein C-II. In bovine, proapolipoprotein C-II was found to be the minor form whereas apolipoprotein C-II was found to be the major form in plasma.

It localises to the secreted. Its function is as follows. Component of chylomicrons, very low-density lipoproteins (VLDL), low-density lipoproteins (LDL), and high-density lipoproteins (HDL) in plasma. Plays an important role in lipoprotein metabolism as an activator of lipoprotein lipase. Both proapolipoprotein C-II and apolipoprotein C-II can activate lipoprotein lipase. This chain is Apolipoprotein C-II (APOC2), found in Camelus dromedarius (Dromedary).